The sequence spans 85 residues: MVVIRLARGGAKKRPFYQIVVTDSRNARDGRFIERIGFFNPTAQGQAEKLRLDADRFAHWVSQGAQPSERVASLAAQAKKAATAA.

This sequence belongs to the bacterial ribosomal protein bS16 family.

This is Small ribosomal subunit protein bS16 from Acinetobacter baylyi (strain ATCC 33305 / BD413 / ADP1).